A 700-amino-acid chain; its full sequence is Protein claret segregational (700 aa).

Phosphoserine is present on residues Ser-94 and Ser-96. The disordered stretch occupies residues 141–185; it reads APSSITATAVKRPPVTRPAPRAAGGAAAKKPAGTGAAASSGAAAA. Over residues 149–185 the composition is skewed to low complexity; sequence AVKRPPVTRPAPRAAGGAAAKKPAGTGAAASSGAAAA. Residues 196-346 adopt a coiled-coil conformation; that stretch reads KARFHDLLEK…ELHNTVMDLR (151 aa). The Kinesin motor domain occupies 348 to 670; that stretch reads NIRVFCRIRP…LRFAASVNSC (323 aa). Position 434 to 441 (434 to 441) interacts with ATP; sequence GQTGSGKT. The segment at 664–668 is required for minus-end directionality; it reads AASVN. A disordered region spans residues 681–700; sequence LNNSVANSSTQSNNSGSFDK.

Belongs to the TRAFAC class myosin-kinesin ATPase superfamily. Kinesin family. NCD subfamily.

It localises to the cytoplasm. The protein resides in the cytoskeleton. It catalyses the reaction ATP + H2O = ADP + phosphate + H(+). Minus-end-directed microtubule-based motor protein. Has ATPase activity. Required for normal chromosomal segregation in meiosis in females, and in early mitotic divisions of the embryo. The protein is Protein claret segregational (ncd) of Drosophila melanogaster (Fruit fly).